A 402-amino-acid chain; its full sequence is Bone morphogenetic protein 8A (402 aa).

An N-terminal signal peptide occupies residues 1–19; it reads MAARPGPLWLLGLTLCALG. Positions 20–263 are excised as a propeptide; that stretch reads GGGPGLRPPP…ASPSPIRTPR (244 aa). Asn158 and Asn343 each carry an N-linked (GlcNAc...) asparagine glycan. Intrachain disulfides connect Cys301-Cys367, Cys330-Cys399, and Cys334-Cys401.

It belongs to the TGF-beta family. Homodimer; disulfide-linked.

The protein resides in the secreted. In terms of biological role, induces cartilage and bone formation. May be the osteoinductive factor responsible for the phenomenon of epithelial osteogenesis. Plays a role in calcium regulation and bone homeostasis. Signaling protein involved in regulation of thermogenesis and energy balance. Proposed to increase the peripheral response of brown adipose tissue (BAT) to adrenergic stimulation while acting centrally in the hypothalamus to increase sympathetic output to BAT. Functionally, growth factor of the TGF-beta superfamily that plays important role in various biological processes, including spermatogenesis, osteogenesis, steroidogenesis as well as regulation of energy balance. Initiates the canonical BMP signaling cascade by associating with type I receptor BMPR1A and type II receptor BMPR2. Once all three components are bound together in a complex at the cell surface, BMPR2 phosphorylates and activates BMPR1A. In turn, BMPR1A propagates signal by phosphorylating SMAD1/5/8 that travel to the nucleus and act as activators and repressors of transcription of target genes. In addition, activates the SMAD2/3 pathway. The sequence is that of Bone morphogenetic protein 8A (BMP8A) from Homo sapiens (Human).